The sequence spans 259 residues: Ribonuclease HII (259 aa).

In terms of domain architecture, RNase H type-2 spans 70 to 258 (TLIVGIDEVG…VKSLVLGKKE (189 aa)). A divalent metal cation contacts are provided by D76, E77, and D168.

It belongs to the RNase HII family. The cofactor is Mn(2+). Mg(2+) is required as a cofactor.

It localises to the cytoplasm. It catalyses the reaction Endonucleolytic cleavage to 5'-phosphomonoester.. Its function is as follows. Endonuclease that specifically degrades the RNA of RNA-DNA hybrids. This Streptococcus pneumoniae (strain ATCC 700669 / Spain 23F-1) protein is Ribonuclease HII.